The following is a 427-amino-acid chain: ATP synthase subunit beta (427 aa).

160–167 (GGAGVGKT) contacts ATP.

The protein belongs to the ATPase alpha/beta chains family. As to quaternary structure, F-type ATPases have 2 components, CF(1) - the catalytic core - and CF(0) - the membrane proton channel. CF(1) has five subunits: alpha(3), beta(3), gamma(1), delta(1), epsilon(1). CF(0) has three main subunits: a(1), b(2) and c(9-12). The alpha and beta chains form an alternating ring which encloses part of the gamma chain. CF(1) is attached to CF(0) by a central stalk formed by the gamma and epsilon chains, while a peripheral stalk is formed by the delta and b chains.

It localises to the cell membrane. It carries out the reaction ATP + H2O + 4 H(+)(in) = ADP + phosphate + 5 H(+)(out). In terms of biological role, produces ATP from ADP in the presence of a proton gradient across the membrane. The catalytic sites are hosted primarily by the beta subunits. The protein is ATP synthase subunit beta of Peptococcus niger.